The following is a 425-amino-acid chain: DNA replication and repair protein RecF (425 aa).

30-37 (GPNGHGKT) is an ATP binding site.

Belongs to the RecF family.

The protein resides in the cytoplasm. In terms of biological role, the RecF protein is involved in DNA metabolism; it is required for DNA replication and normal SOS inducibility. RecF binds preferentially to single-stranded, linear DNA. It also seems to bind ATP. The polypeptide is DNA replication and repair protein RecF (Corynebacterium jeikeium (strain K411)).